Consider the following 501-residue polypeptide: Probable cytochrome P450 508A4 (501 aa).

Residues methionine 1–tyrosine 21 form a helical membrane-spanning segment. Heme is bound at residue cysteine 445.

Belongs to the cytochrome P450 family. Heme is required as a cofactor.

The protein resides in the membrane. The protein is Probable cytochrome P450 508A4 (cyp508A4) of Dictyostelium discoideum (Social amoeba).